A 308-amino-acid chain; its full sequence is Aspartate carbamoyltransferase catalytic subunit (308 aa).

Arg-55 and Thr-56 together coordinate carbamoyl phosphate. Lys-84 lines the L-aspartate pocket. Carbamoyl phosphate is bound by residues Arg-105, His-133, and Gln-136. L-aspartate is bound by residues Arg-167 and Arg-228. 2 residues coordinate carbamoyl phosphate: Leu-267 and Pro-268.

Belongs to the aspartate/ornithine carbamoyltransferase superfamily. ATCase family. As to quaternary structure, heterooligomer of catalytic and regulatory chains.

The catalysed reaction is carbamoyl phosphate + L-aspartate = N-carbamoyl-L-aspartate + phosphate + H(+). It functions in the pathway pyrimidine metabolism; UMP biosynthesis via de novo pathway; (S)-dihydroorotate from bicarbonate: step 2/3. Its function is as follows. Catalyzes the condensation of carbamoyl phosphate and aspartate to form carbamoyl aspartate and inorganic phosphate, the committed step in the de novo pyrimidine nucleotide biosynthesis pathway. The sequence is that of Aspartate carbamoyltransferase catalytic subunit from Methanocella arvoryzae (strain DSM 22066 / NBRC 105507 / MRE50).